The following is a 220-amino-acid chain: MNRLIILCLVAATIYSTIALPMKEDISNEERPTSVNEKPVKKSVAVAGAVIQGAALAFQVLDKILTSLGGIGRKIAIGVDNESGMKWAARNVYFYSGTSDTVLPYSVPHSKAFLYGARKTRGSVRGAVGVLAYSMSDGNTLGILFSVPYDYNWYSNWWNIKVYRGYKRANKWMYHDLYYYARPHKGNNEWHEKSLGYGLKSKGFMTSSGQTKLEIRVSRA.

The signal sequence occupies residues 1–19 (MNRLIILCLVAATIYSTIA). Residues 20 to 42 (LPMKEDISNEERPTSVNEKPVKK) constitute a propeptide that is removed on maturation. Phosphocholine is bound by residues Ser96, Val128, Ser146, Pro148, Tyr174, Tyr178, and Tyr179. The tract at residues 146–161 (SVPYDYNWYSNWWNIK) is trp-rich region, which is important for the binding to lipid membrane. A Cell attachment site, crucial for protein stability motif is present at residues 185 to 187 (KGN).

The protein belongs to the actinoporin family. Sea anemone subfamily. As to quaternary structure, octamer or nonamer in membranes. Monomer in the soluble state. Expressed in tentacles.

The protein localises to the secreted. It is found in the nematocyst. Its subcellular location is the target cell membrane. In terms of biological role, probably acts in predation. Pore-forming protein that forms cations-selective hydrophilic pores of around 1 nm and causes cytolysis. Pore formation is a multi-step process that involves specific recognition of membrane sphingomyelin (but neither cholesterol nor phosphatidylcholine) using aromatic rich region and adjacent phosphocholine (POC) binding site, firm binding to the membrane (mainly driven by hydrophobic interactions) accompanied by the transfer of the N-terminal region to the lipid-water interface and finally pore formation after oligomerization of monomers. Shows hemolytic activity on equine erythrocytes. Hemolysis is moderately inhibited in presence of sphingomyelin, suggesting that this protein targets sphingomyelin. The polypeptide is Deep-sea actinoporin Cjtox I (Cribrinopsis japonica (Deep-sea anemone)).